A 239-amino-acid polypeptide reads, in one-letter code: Phosphoribosylaminoimidazole-succinocarboxamide synthase (239 aa).

Belongs to the SAICAR synthetase family.

The catalysed reaction is 5-amino-1-(5-phospho-D-ribosyl)imidazole-4-carboxylate + L-aspartate + ATP = (2S)-2-[5-amino-1-(5-phospho-beta-D-ribosyl)imidazole-4-carboxamido]succinate + ADP + phosphate + 2 H(+). The protein operates within purine metabolism; IMP biosynthesis via de novo pathway; 5-amino-1-(5-phospho-D-ribosyl)imidazole-4-carboxamide from 5-amino-1-(5-phospho-D-ribosyl)imidazole-4-carboxylate: step 1/2. In Acinetobacter baylyi (strain ATCC 33305 / BD413 / ADP1), this protein is Phosphoribosylaminoimidazole-succinocarboxamide synthase.